The primary structure comprises 469 residues: 3-isopropylmalate dehydratase large subunit (469 aa).

[4Fe-4S] cluster contacts are provided by Cys-350, Cys-410, and Cys-413.

Belongs to the aconitase/IPM isomerase family. LeuC type 1 subfamily. As to quaternary structure, heterodimer of LeuC and LeuD. The cofactor is [4Fe-4S] cluster.

The catalysed reaction is (2R,3S)-3-isopropylmalate = (2S)-2-isopropylmalate. It participates in amino-acid biosynthesis; L-leucine biosynthesis; L-leucine from 3-methyl-2-oxobutanoate: step 2/4. Catalyzes the isomerization between 2-isopropylmalate and 3-isopropylmalate, via the formation of 2-isopropylmaleate. This Allorhizobium ampelinum (strain ATCC BAA-846 / DSM 112012 / S4) (Agrobacterium vitis (strain S4)) protein is 3-isopropylmalate dehydratase large subunit.